The primary structure comprises 210 residues: Large ribosomal subunit protein uL3 (210 aa).

Residues 133-152 (ATHGNSLSHRVHGSTGQNQT) are disordered. The residue at position 151 (Q151) is an N5-methylglutamine.

It belongs to the universal ribosomal protein uL3 family. As to quaternary structure, part of the 50S ribosomal subunit. Forms a cluster with proteins L14 and L19. Post-translationally, methylated by PrmB.

One of the primary rRNA binding proteins, it binds directly near the 3'-end of the 23S rRNA, where it nucleates assembly of the 50S subunit. The sequence is that of Large ribosomal subunit protein uL3 from Francisella philomiragia subsp. philomiragia (strain ATCC 25017 / CCUG 19701 / FSC 153 / O#319-036).